Reading from the N-terminus, the 332-residue chain is Casein kinase I isoform 2 (332 aa).

Residues 11 to 282 (FRIGQKIGSG…YLKRLFRELF (272 aa)) form the Protein kinase domain. ATP is bound by residues 17–25 (IGSGSFGEI) and Lys40. The active-site Proton acceptor is Asp133. Positions 306 to 332 (EGRADQQQQQQQQQQRRGSEKEDEHPV) are disordered. The segment covering 311 to 320 (QQQQQQQQQQ) has biased composition (low complexity). The segment covering 322–332 (RGSEKEDEHPV) has biased composition (basic and acidic residues).

It belongs to the protein kinase superfamily. Ser/Thr protein kinase family. Mg(2+) is required as a cofactor.

The catalysed reaction is L-seryl-[protein] + ATP = O-phospho-L-seryl-[protein] + ADP + H(+). It catalyses the reaction L-threonyl-[protein] + ATP = O-phospho-L-threonyl-[protein] + ADP + H(+). Its function is as follows. Serine/threonine protein kinase. May phosphorylate ZC3H11 during unstressed conditions, leading to proteasome-dependent degradation of ZC3H11. The protein is Casein kinase I isoform 2 of Trypanosoma brucei brucei.